A 290-amino-acid chain; its full sequence is Enoyl-CoA hydratase, mitochondrial (290 aa).

The transit peptide at 1–27 (MAALRALLPRVRAPLRPWLFCPVQRSF) directs the protein to the mitochondrion. Residues 98–101 (ADIK) and Gly141 each bind substrate. Position 101 is an N6-acetyllysine; alternate (Lys101). Lys101 is modified (N6-succinyllysine; alternate). Lys204 bears the N6-succinyllysine mark. Position 211 is an N6-acetyllysine (Lys211).

This sequence belongs to the enoyl-CoA hydratase/isomerase family. As to quaternary structure, homohexamer; dimer of trimers.

It is found in the mitochondrion matrix. It catalyses the reaction a (3S)-3-hydroxyacyl-CoA = a (2E)-enoyl-CoA + H2O. The catalysed reaction is a (3E)-enoyl-CoA = a 4-saturated (2E)-enoyl-CoA. It carries out the reaction (3E)-hexenoyl-CoA = (2E)-hexenoyl-CoA. The enzyme catalyses (3S)-3-hydroxybutanoyl-CoA = (2E)-butenoyl-CoA + H2O. It catalyses the reaction 3-hydroxyisovaleryl-CoA = 3-methylbut-2-enoyl-CoA + H2O. The catalysed reaction is 3-hydroxypropanoyl-CoA = acryloyl-CoA + H2O. It carries out the reaction 3-hydroxybutanoyl-CoA = (2E)-butenoyl-CoA + H2O. The enzyme catalyses 2-methylpropenoyl-CoA + H2O = (S)-3-hydroxyisobutanoyl-CoA. It catalyses the reaction (3S)-hydroxyhexanoyl-CoA = (2E)-hexenoyl-CoA + H2O. The catalysed reaction is (3S)-hydroxydecanoyl-CoA = (2E)-decenoyl-CoA + H2O. The protein operates within lipid metabolism; fatty acid beta-oxidation. Functionally, converts unsaturated trans-2-enoyl-CoA species ((2E)-enoyl-CoA) to the corresponding 3(S)-3-hydroxyacyl-CoA species through addition of a water molecule to the double bond. Catalyzes the hydration of medium- and short-chained fatty enoyl-CoA thioesters from 4 carbons long (C4) up to C16. Has high substrate specificity for crotonyl-CoA ((2E)-butenoyl-CoA) and moderate specificity for acryloyl-CoA, 3-methylcrotonyl-CoA (3-methyl-(2E)-butenoyl-CoA) and methacrylyl-CoA ((2E)-2-methylpropenoyl-CoA). Can bind tiglyl-CoA (2-methylcrotonoyl-CoA), but hydrates only a small amount of this substrate. Plays a key role in the beta-oxidation spiral of short- and medium-chain fatty acid oxidation. At a lower rate than the hydratase reaction, catalyzes the isomerase reaction of trans-3-enoyl-CoA species (such as (3E)-hexenoyl-CoA) to trans-2-enoyl-CoA species (such as (2E)-hexenoyl-CoA), which are subsequently hydrated to 3(S)-3-hydroxyacyl-CoA species (such as (3S)-hydroxyhexanoyl-CoA). This is Enoyl-CoA hydratase, mitochondrial (ECHS1) from Bos taurus (Bovine).